Consider the following 312-residue polypeptide: Olfactory receptor 5p57 (312 aa).

Topologically, residues 1–25 (MEPGNYTVVTEFILLGLTDDITVSV) are extracellular. N-linked (GlcNAc...) asparagine glycosylation is present at Asn5. Residues 26–46 (ILFVMFLIVYSVTLMGNLNII) traverse the membrane as a helical segment. The Cytoplasmic segment spans residues 47-54 (VLIRTSPQ). A helical transmembrane segment spans residues 55 to 75 (LHTPMYLFLSHLAFLDIGYSS). The Extracellular segment spans residues 76–99 (SVTPIMLRGFLRKGTFIPVAGCVA). Residues Cys97 and Cys189 are joined by a disulfide bond. A helical membrane pass occupies residues 100-120 (QLCIVVAFGTSESFLLASMAY). Residues 121 to 133 (DRYVAICSPLLYS) lie on the Cytoplasmic side of the membrane. Residues 134 to 154 (TQMSSTVCILLVGTSYLGGWV) traverse the membrane as a helical segment. Residues 155–196 (NAWIFTGCSLNLSFCGPNKINHFFCDYSPLLKLSCSHDFSFE) lie on the Extracellular side of the membrane. The N-linked (GlcNAc...) asparagine glycan is linked to Asn165. Residues 197–217 (VIPAISSGSIIVVTVFIIALS) traverse the membrane as a helical segment. Residues 218 to 237 (YVYILVSILKMRSTEGRQKA) lie on the Cytoplasmic side of the membrane. The helical transmembrane segment at 238–258 (FSTCTSHLTAVTLFFGTITFI) threads the bilayer. At 259–271 (YVMPQSSYSTDQN) the chain is on the extracellular side. Residues 272 to 292 (KVVSVFYTVVIPMLNPLIYSF) traverse the membrane as a helical segment. Topologically, residues 293–312 (RNKEVKEAMKKLIAKTHWWS) are cytoplasmic.

It belongs to the G-protein coupled receptor 1 family.

It is found in the cell membrane. Functionally, probable odorant receptor, which recognizes only aliphatic alcohols, suggesting that it may convey a 'woody' or 'sweet' sour. This Mus musculus (Mouse) protein is Olfactory receptor 5p57.